The primary structure comprises 455 residues: Squamosa promoter-binding-like protein 16 (455 aa).

The SBP-type zinc finger occupies 115–192; the sequence is CPSCAVDGCK…DGHNRRRRKP (78 aa). 8 residues coordinate Zn(2+): Cys-118, Cys-123, Cys-140, His-143, Cys-159, Cys-162, His-166, and Cys-178. Residues 175–191 carry the Bipartite nuclear localization signal motif; the sequence is KRSCRKRLDGHNRRRRK. Residues 182-204 form a disordered region; that stretch reads LDGHNRRRRKPQPDPMNSASYLA.

Expressed in young panicles.

It localises to the nucleus. Functionally, trans-acting factor that binds specifically to the consensus nucleotide sequence 5'-TNCGTACAA-3'. May be involved in panicle development. The chain is Squamosa promoter-binding-like protein 16 (SPL16) from Oryza sativa subsp. japonica (Rice).